The primary structure comprises 388 residues: Formate-dependent phosphoribosylglycinamide formyltransferase (388 aa).

N(1)-(5-phospho-beta-D-ribosyl)glycinamide is bound by residues 20–21 (EL) and Glu-80. ATP is bound by residues Arg-112, Lys-153, 158–163 (SSGKGQ), 193–196 (EEFI), and Glu-201. The 190-residue stretch at 117 to 306 (RLAFEKLGLR…EFEIHARAIL (190 aa)) folds into the ATP-grasp domain. Positions 265 and 277 each coordinate Mg(2+). Residues Asp-284, Lys-352, and 359–360 (RR) each bind N(1)-(5-phospho-beta-D-ribosyl)glycinamide.

It belongs to the PurK/PurT family. In terms of assembly, homodimer.

It catalyses the reaction N(1)-(5-phospho-beta-D-ribosyl)glycinamide + formate + ATP = N(2)-formyl-N(1)-(5-phospho-beta-D-ribosyl)glycinamide + ADP + phosphate + H(+). It participates in purine metabolism; IMP biosynthesis via de novo pathway; N(2)-formyl-N(1)-(5-phospho-D-ribosyl)glycinamide from N(1)-(5-phospho-D-ribosyl)glycinamide (formate route): step 1/1. In terms of biological role, involved in the de novo purine biosynthesis. Catalyzes the transfer of formate to 5-phospho-ribosyl-glycinamide (GAR), producing 5-phospho-ribosyl-N-formylglycinamide (FGAR). Formate is provided by PurU via hydrolysis of 10-formyl-tetrahydrofolate. In Methanococcus maripaludis (strain DSM 14266 / JCM 13030 / NBRC 101832 / S2 / LL), this protein is Formate-dependent phosphoribosylglycinamide formyltransferase.